Reading from the N-terminus, the 250-residue chain is Tripartite motif-containing protein 73 (250 aa).

Residues 16–57 (CPICLEVFKESLMLQCGHSYCKGCLVSLSYHLDTKVRCPMCW) form an RING-type zinc finger. The segment at 84 to 125 (PEPKVCVHHRNPLSLFCEKDQELICGLCGLLGSHQHHPVTPV) adopts a B box-type zinc-finger fold. Zn(2+)-binding residues include C89, H92, C111, and H117. 2 coiled-coil regions span residues 125 to 169 (VSTV…NESD) and 204 to 235 (LVAS…FGNE).

This sequence belongs to the TRIM/RBCC family.

This chain is Tripartite motif-containing protein 73 (TRIM73), found in Homo sapiens (Human).